The sequence spans 530 residues: Na(+)/H(+) antiporter NhaB (530 aa).

The next 10 membrane-spanning stretches (helical) occupy residues 13–33 (FLGQ…LINP), 67–87 (PGGL…ETVL), 90–110 (VVGN…IYFL), 138–158 (AAAL…VIAV), 205–225 (LLMH…VGEP), 245–265 (MAPI…FLEF), 302–333 (LVIQ…VIIL), 350–370 (FEEA…VAVI), 449–469 (VATP…LAPL), and 477–497 (MVIM…VMTA).

This sequence belongs to the NhaB Na(+)/H(+) (TC 2.A.34) antiporter family.

It is found in the cell inner membrane. It catalyses the reaction 2 Na(+)(in) + 3 H(+)(out) = 2 Na(+)(out) + 3 H(+)(in). In terms of biological role, na(+)/H(+) antiporter that extrudes sodium in exchange for external protons. The sequence is that of Na(+)/H(+) antiporter NhaB from Alcanivorax borkumensis (strain ATCC 700651 / DSM 11573 / NCIMB 13689 / SK2).